A 501-amino-acid polypeptide reads, in one-letter code: MNRRQVLAALAAIPLLPEAFPANAQAPQKPAAFDPSVVRQIARQLASKPYQAPDTKLPSALADLDYDAYRAIRFNPERALWRGDQLPFQVQFFHRGLFYKNAVTIYEVANGKAQQIRYRSDDFSFGATPAPPPDADLGFAGFRIHAPINKPDYYDEVSVFLGATYFRAVAKGQHYGLSARGLSIDTGQSGGEEFPLFTAFWLERPAPEASSMVVHALLDSKSVAGAYRFTIRPGDTTVFDVEMALYPRADLEHAGLSPMTSMFFFGPNDPSDAADFRPEVHDSDGLAIFNGRGEQLWRPLANPRDLQISAFADLNPRGIGLMQRERQFQAYQDLESRFGLRPSLWAEPIGDWGEGVVQLIEIPTKEEVHDNIAAFWTPKTPLKAKGEHIYTYRLHWGPDTPKPSSLARFSRTGISVRGDHRLFVLDITGDILKSVDAGAVRGVVSADKGEIRNVVTQPNPETGGWRLSFDLTPETPAAELRASLWGGDKALSEVWVYRWTL.

The signal sequence occupies residues 1 to 24; sequence MNRRQVLAALAAIPLLPEAFPANA.

This sequence belongs to the OpgD/OpgG family.

It localises to the periplasm. It functions in the pathway glycan metabolism; osmoregulated periplasmic glucan (OPG) biosynthesis. Functionally, involved in the biosynthesis of osmoregulated periplasmic glucans (OPGs). The polypeptide is Glucans biosynthesis protein G (Rhodopseudomonas palustris (strain BisA53)).